Consider the following 196-residue polypeptide: Glycerol-3-phosphate acyltransferase (196 aa).

The next 4 membrane-spanning stretches (helical) occupy residues 4-24 (IYIAALVLGYLFGSIPFGLIL), 70-90 (VLIAAGFGGAEAAMLAALGAF), 111-131 (IGVLLGLFWPAALVFCVLWLA), and 152-172 (IFLWWFGHPTMASLFAVLTLL).

Belongs to the PlsY family. Probably interacts with PlsX.

The protein localises to the cell inner membrane. It catalyses the reaction an acyl phosphate + sn-glycerol 3-phosphate = a 1-acyl-sn-glycero-3-phosphate + phosphate. Its pathway is lipid metabolism; phospholipid metabolism. Its function is as follows. Catalyzes the transfer of an acyl group from acyl-phosphate (acyl-PO(4)) to glycerol-3-phosphate (G3P) to form lysophosphatidic acid (LPA). This enzyme utilizes acyl-phosphate as fatty acyl donor, but not acyl-CoA or acyl-ACP. This Rhodopseudomonas palustris (strain BisB5) protein is Glycerol-3-phosphate acyltransferase.